Reading from the N-terminus, the 425-residue chain is Enolase 2 (425 aa).

Gln163 serves as a coordination point for (2R)-2-phosphoglycerate. Catalysis depends on Glu205, which acts as the Proton donor. 3 residues coordinate Mg(2+): Asp242, Glu285, and Asp312. 4 residues coordinate (2R)-2-phosphoglycerate: Lys337, Arg366, Ser367, and Lys388. Catalysis depends on Lys337, which acts as the Proton acceptor.

This sequence belongs to the enolase family. The cofactor is Mg(2+).

Its subcellular location is the cytoplasm. The protein resides in the secreted. It localises to the cell surface. It catalyses the reaction (2R)-2-phosphoglycerate = phosphoenolpyruvate + H2O. It functions in the pathway carbohydrate degradation; glycolysis; pyruvate from D-glyceraldehyde 3-phosphate: step 4/5. Functionally, catalyzes the reversible conversion of 2-phosphoglycerate (2-PG) into phosphoenolpyruvate (PEP). It is essential for the degradation of carbohydrates via glycolysis. In Cupriavidus metallidurans (strain ATCC 43123 / DSM 2839 / NBRC 102507 / CH34) (Ralstonia metallidurans), this protein is Enolase 2.